The following is an 825-amino-acid chain: Probable ATP-dependent RNA helicase DDX20 (825 aa).

A disordered region spans residues 27–50; sequence PVQAVEPTPASPWTQRTAHDIGGP. The short motif at 63–91 is the Q motif element; sequence ADFESLLLSRPVLEGLRAAGFERPSPVQL. ATP is bound by residues Arg-85, Gln-90, 107 to 114, and 110 to 115; these read AKSGTGKT and GTGKTC. The region spanning 94–265 is the Helicase ATP-binding domain; it reads IPLGRCGLDL…TRYMRDPTFV (172 aa). Position 188 is a phosphoserine (Ser-188). The short motif at 212 to 215 is the DEAD box element; sequence DEAD. At Ser-270 the chain carries Phosphoserine. Residues 300 to 449 enclose the Helicase C-terminal domain; it reads HLQELFSKVP…PIPPGLMEEC (150 aa). Polar residues-rich tracts occupy residues 465–475 and 484–504; these read SPTVATQSPKK and FQSQRTPGNQTPSPRNTSASA. Disordered stretches follow at residues 465 to 573 and 642 to 753; these read SPTV…PGSL and QMLV…EPQE. Ser-472, Ser-501, and Ser-506 each carry phosphoserine. The span at 508–518 shows a compositional bias: basic residues; the sequence is RPKHSKPKLPV. A compositionally biased stretch (polar residues) spans 547–571; the sequence is KNSVQTSVEDSSSNSQHQAKDSSPG. Thr-552 carries the phosphothreonine modification. Phosphoserine is present on residues Ser-561, Ser-653, Ser-655, Ser-657, Ser-673, Ser-678, and Ser-679. Low complexity predominate over residues 646 to 668; the sequence is SSSQSGDSESDSDSCSSRTSSQS. 2 positions are modified to phosphothreonine: Thr-689 and Thr-706. Residues 698-711 are compositionally biased toward polar residues; the sequence is EQVQNGNDTPTQVE. Basic residues predominate over residues 733–744; the sequence is KQSRRNPARRSS.

Belongs to the DEAD box helicase family. DDX20 subfamily. As to quaternary structure, part of the core SMN complex that contains SMN1, GEMIN2/SIP1, DDX20/GEMIN3, GEMIN4, GEMIN5, GEMIN6, GEMIN7, GEMIN8 and STRAP/UNRIP. Part of the SMN-Sm complex that contains SMN1, GEMIN2/SIP1, DDX20/GEMIN3, GEMIN4, GEMIN5, GEMIN6, GEMIN7, GEMIN8, STRAP/UNRIP and the Sm proteins SNRPB, SNRPD1, SNRPD2, SNRPD3, SNRPE, SNRPF and SNRPG. Interacts with SMN1; the interaction is direct. Interacts with GEMIN4; the interaction is direct. Interacts with GEMIN5. Interacts with SNUPN; the interaction is direct. Interacts with PPP4R2. Interacts with FOXL2. Interacts with NANOS1 and PUM2.

It is found in the cytoplasm. It localises to the nucleus. Its subcellular location is the gem. It catalyses the reaction ATP + H2O = ADP + phosphate + H(+). The catalysed reaction is a ribonucleoside 5'-triphosphate + H2O = a ribonucleoside 5'-diphosphate + phosphate + H(+). The SMN complex catalyzes the assembly of small nuclear ribonucleoproteins (snRNPs), the building blocks of the spliceosome, and thereby plays an important role in the splicing of cellular pre-mRNAs. Most spliceosomal snRNPs contain a common set of Sm proteins SNRPB, SNRPD1, SNRPD2, SNRPD3, SNRPE, SNRPF and SNRPG that assemble in a heptameric protein ring on the Sm site of the small nuclear RNA to form the core snRNP (Sm core). In the cytosol, the Sm proteins SNRPD1, SNRPD2, SNRPE, SNRPF and SNRPG are trapped in an inactive 6S pICln-Sm complex by the chaperone CLNS1A that controls the assembly of the core snRNP. To assemble core snRNPs, the SMN complex accepts the trapped 5Sm proteins from CLNS1A forming an intermediate. Binding of snRNA inside 5Sm triggers eviction of the SMN complex, thereby allowing binding of SNRPD3 and SNRPB to complete assembly of the core snRNP. May also play a role in the metabolism of small nucleolar ribonucleoprotein (snoRNPs). The sequence is that of Probable ATP-dependent RNA helicase DDX20 (Ddx20) from Mus musculus (Mouse).